The following is a 254-amino-acid chain: Probable membrane transporter protein YjnA (254 aa).

6 helical membrane passes run 5 to 25 (IILM…GGAA), 75 to 95 (AIGS…FPAF), 105 to 125 (HALG…LFLD), 143 to 163 (ALTI…SIGS), 187 to 207 (IAHA…FGSV), and 209 to 229 (YMLA…GSHL).

It belongs to the 4-toluene sulfonate uptake permease (TSUP) (TC 2.A.102) family.

It is found in the cell membrane. This chain is Probable membrane transporter protein YjnA (yjnA), found in Bacillus subtilis (strain 168).